Here is a 109-residue protein sequence, read N- to C-terminus: Cell division suppressor protein YneA (109 aa).

In terms of domain architecture, LysM spans 39–90; the sequence is SEVNVSEGDSLWALADQYAGKSDMAKADFVSWVEKENNLADGHVEAGDSVVI.

This sequence belongs to the YneA family.

Its subcellular location is the cytoplasm. Functionally, inhibits cell division during the SOS response. Affects a later stage of the cell division protein assembly, after the assembly of the Z ring, by probably suppressing recruitment of FtsL and/or DivIC to the division machinery. The sequence is that of Cell division suppressor protein YneA from Listeria monocytogenes serotype 4b (strain CLIP80459).